The primary structure comprises 495 residues: Glycerol kinase (495 aa).

T11 contributes to the ADP binding site. ATP is bound by residues T11, T12, and S13. T11 contributes to the sn-glycerol 3-phosphate binding site. R15 is an ADP binding site. Positions 81, 82, 133, and 242 each coordinate sn-glycerol 3-phosphate. Residues R81, E82, Y133, D242, and Q243 each contribute to the glycerol site. ADP is bound by residues T264 and G307. ATP is bound by residues T264, G307, Q311, and G409. G409 and N413 together coordinate ADP.

The protein belongs to the FGGY kinase family.

The enzyme catalyses glycerol + ATP = sn-glycerol 3-phosphate + ADP + H(+). It participates in polyol metabolism; glycerol degradation via glycerol kinase pathway; sn-glycerol 3-phosphate from glycerol: step 1/1. Inhibited by fructose 1,6-bisphosphate (FBP). Key enzyme in the regulation of glycerol uptake and metabolism. Catalyzes the phosphorylation of glycerol to yield sn-glycerol 3-phosphate. In Borrelia hermsii (strain HS1 / DAH), this protein is Glycerol kinase.